The following is a 99-amino-acid chain: Plastocyanin (99 aa).

Residues 1-99 (VEILLGGEDG…AGMVGKVTVN (99 aa)) enclose the Plastocyanin-like domain. Positions 37, 84, 87, and 92 each coordinate Cu cation.

This sequence belongs to the plastocyanin family. Cu(2+) is required as a cofactor.

The protein localises to the plastid. The protein resides in the chloroplast thylakoid membrane. Functionally, participates in electron transfer between P700 and the cytochrome b6-f complex in photosystem I. In Sambucus nigra (European elder), this protein is Plastocyanin (PETE).